The primary structure comprises 193 residues: Surfactant protein C (193 aa).

The propeptide occupies 1-23 (MDMSSKEVLMESPPDYSAGPRSQ). Residues cysteine 28 and cysteine 29 are each lipidated (S-palmitoyl cysteine). Positions 59 to 193 (HMSQKHTEMV…LCGELPLYYI (135 aa)) are excised as a propeptide. Positions 94–193 (FSIGSTGIVV…LCGELPLYYI (100 aa)) constitute a BRICHOS domain. Cysteine 121 and cysteine 185 are joined by a disulfide. Residues 147–170 (KPSTPTSKLGQEEGHDTGSESDSS) are disordered.

It localises to the secreted. It is found in the extracellular space. The protein resides in the surface film. Pulmonary surfactant associated proteins promote alveolar stability by lowering the surface tension at the air-liquid interface in the peripheral air spaces. The polypeptide is Surfactant protein C (Mus musculus (Mouse)).